Here is a 160-residue protein sequence, read N- to C-terminus: Endoribonuclease YbeY (160 aa).

Residues histidine 123, histidine 127, and histidine 133 each coordinate Zn(2+).

Belongs to the endoribonuclease YbeY family. The cofactor is Zn(2+).

The protein resides in the cytoplasm. Single strand-specific metallo-endoribonuclease involved in late-stage 70S ribosome quality control and in maturation of the 3' terminus of the 16S rRNA. The protein is Endoribonuclease YbeY of Shouchella clausii (strain KSM-K16) (Alkalihalobacillus clausii).